Reading from the N-terminus, the 65-residue chain is DNA-directed RNA polymerase subunit omega (65 aa).

It belongs to the RNA polymerase subunit omega family. The RNAP catalytic core consists of 2 alpha, 1 beta, 1 beta' and 1 omega subunit. When a sigma factor is associated with the core the holoenzyme is formed, which can initiate transcription.

It carries out the reaction RNA(n) + a ribonucleoside 5'-triphosphate = RNA(n+1) + diphosphate. Its function is as follows. Promotes RNA polymerase assembly. Latches the N- and C-terminal regions of the beta' subunit thereby facilitating its interaction with the beta and alpha subunits. This chain is DNA-directed RNA polymerase subunit omega, found in Finegoldia magna (strain ATCC 29328 / DSM 20472 / WAL 2508) (Peptostreptococcus magnus).